Reading from the N-terminus, the 140-residue chain is uncharacterized protein (140 aa).

A run of 3 helical transmembrane segments spans residues 20–42, 88–110, and 115–137; these read ILYYGGLIGIIFMAITFAIYVSG, FVALAFLAMITIICYLAIIPVLL, and IIYTILAIAEVIILLLAASGLLQ.

The protein resides in the cell membrane. This is an uncharacterized protein from Archaeoglobus fulgidus (strain ATCC 49558 / DSM 4304 / JCM 9628 / NBRC 100126 / VC-16).